Here is a 316-residue protein sequence, read N- to C-terminus: Beta-ketoacyl-[acyl-carrier-protein] synthase III 1 (316 aa).

Active-site residues include cysteine 112 and histidine 243. An ACP-binding region spans residues 244–248; sequence QANYR. Asparagine 273 is an active-site residue.

It belongs to the thiolase-like superfamily. FabH family. Homodimer.

The protein resides in the cytoplasm. It carries out the reaction malonyl-[ACP] + acetyl-CoA + H(+) = 3-oxobutanoyl-[ACP] + CO2 + CoA. The protein operates within lipid metabolism; fatty acid biosynthesis. Its function is as follows. Catalyzes the condensation reaction of fatty acid synthesis by the addition to an acyl acceptor of two carbons from malonyl-ACP. Catalyzes the first condensation reaction which initiates fatty acid synthesis and may therefore play a role in governing the total rate of fatty acid production. Possesses both acetoacetyl-ACP synthase and acetyl transacylase activities. Its substrate specificity determines the biosynthesis of branched-chain and/or straight-chain of fatty acids. This is Beta-ketoacyl-[acyl-carrier-protein] synthase III 1 from Vibrio vulnificus (strain YJ016).